The chain runs to 297 residues: Formamidopyrimidine-DNA glycosylase (297 aa).

Residue Pro-2 is the Schiff-base intermediate with DNA of the active site. Glu-3 acts as the Proton donor in catalysis. Lys-58 functions as the Proton donor; for beta-elimination activity in the catalytic mechanism. Residues His-104, Arg-127, and Lys-170 each contribute to the DNA site. An FPG-type zinc finger spans residues 261–297 (NVYDREGEACRTPGCTGTVERMTQAGRSTFHCPQCQR). The Proton donor; for delta-elimination activity role is filled by Arg-287.

Belongs to the FPG family. As to quaternary structure, monomer. Requires Zn(2+) as cofactor.

It carries out the reaction Hydrolysis of DNA containing ring-opened 7-methylguanine residues, releasing 2,6-diamino-4-hydroxy-5-(N-methyl)formamidopyrimidine.. It catalyses the reaction 2'-deoxyribonucleotide-(2'-deoxyribose 5'-phosphate)-2'-deoxyribonucleotide-DNA = a 3'-end 2'-deoxyribonucleotide-(2,3-dehydro-2,3-deoxyribose 5'-phosphate)-DNA + a 5'-end 5'-phospho-2'-deoxyribonucleoside-DNA + H(+). In terms of biological role, involved in base excision repair of DNA damaged by oxidation or by mutagenic agents. Acts as a DNA glycosylase that recognizes and removes damaged bases. Has a preference for oxidized purines, such as 7,8-dihydro-8-oxoguanine (8-oxoG). Has AP (apurinic/apyrimidinic) lyase activity and introduces nicks in the DNA strand. Cleaves the DNA backbone by beta-delta elimination to generate a single-strand break at the site of the removed base with both 3'- and 5'-phosphates. The protein is Formamidopyrimidine-DNA glycosylase of Allorhizobium ampelinum (strain ATCC BAA-846 / DSM 112012 / S4) (Agrobacterium vitis (strain S4)).